The chain runs to 607 residues: MASTANMISQLKKLSIAEPAVAKDSHPDVNIVDLMRNYISQELSKISGVDSSLIFPALEWTNTMERGDLLIPIPRLRIKGANPKDLAVQWAEKFPCGDFLEKVEANGPFIQFFFNPQFLAKLVIPDILTRKEDYGSCKLVENKKVIIEFSSPNIAKPFHAGHLRSTIIGGFLANLYEKLGWEVIRMNYLGDWGKQFGLLAVGFERYGNEEALVKDPIHHLFDVYVRINKDIEEEGDSIPLEQSTNGKAREYFKRMEDGDEEALKIWKRFREFSIEKYIDTYARLNIKYDVYSGESQVSKESMLKAIDLFKEKGLTHEDKGAVLIDLTKFNKKLGKAIVQKSDGTTLYLTRDVGAAMDRYEKYHFDKMIYVIASQQDLHAAQFFEILKQMGFEWAKDLQHVNFGMVQGMSTRKGTVVFLDNILEETKEKMHEVMKKNENKYAQIEHPEEVADLVGISAVMIQDMQGKRINNYEFKWERMLSFEGDTGPYLQYAHSRLRSVERNASGITQEKWINADFSLLKEPAAKLLIRLLGQYPDVLRNAIKTHEPTTVVTYLFKLTHQVSSCYDVLWVAGQTEELATARLALYGAARQVLYNGMRLLGLTPVERM.

At alanine 2 the chain carries N-acetylalanine. Phosphoserine is present on serine 15. Interaction with tRNA regions lie at residues 59–60 (EW) and 106–111 (NGPFIQ). Residues 148-153 (EFSSPN), histidine 162, tyrosine 347, aspartate 351, and glutamine 375 contribute to the L-arginine site. The short motif at 151-162 (SPNIAKPFHAGH) is the 'HIGH' region element. Positions 484-498 (DTGPYLQYAHSRLRS) are interaction with tRNA.

This sequence belongs to the class-I aminoacyl-tRNA synthetase family. As to quaternary structure, monomer.

It is found in the cytoplasm. The protein localises to the cytosol. It catalyses the reaction tRNA(Arg) + L-arginine + ATP = L-arginyl-tRNA(Arg) + AMP + diphosphate. In terms of biological role, forms part of a macromolecular complex that catalyzes the attachment of specific amino acids to cognate tRNAs during protein synthesis. The protein is Arginine--tRNA ligase, cytoplasmic of Saccharomyces cerevisiae (strain ATCC 204508 / S288c) (Baker's yeast).